Here is a 660-residue protein sequence, read N- to C-terminus: Phosphatidylinositol-3-phosphate phosphatase MTMR7 (660 aa).

One can recognise a Myotubularin phosphatase domain in the interval Gly126–Tyr504. Positions 250, 275, and 276 each coordinate a 1,2-diacyl-sn-glycero-3-phospho-(1D-myo-inositol-3-phosphate). Residue Cys338 is the Phosphocysteine intermediate of the active site. Residues Ser339, Asp340, Gly341, Trp342, Asp343, Arg344, and Arg384 each contribute to the a 1,2-diacyl-sn-glycero-3-phospho-(1D-myo-inositol-3-phosphate) site. Positions Leu521–Asn551 form a coiled coil. The disordered stretch occupies residues Lys554–Ala660. A compositionally biased stretch (polar residues) spans Ser566–Gln596. Thr578 bears the Phosphothreonine mark. A compositionally biased stretch (basic and acidic residues) spans Ala641–Asp653.

It belongs to the protein-tyrosine phosphatase family. Non-receptor class myotubularin subfamily. In terms of assembly, heterodimer (via C-terminus) with MTMR9 (via coiled coil domain); the interaction enhances MTMR7 catalytic activity. Does not homodimerize. Interacts with RAB1B (in GDP-bound form). As to expression, expressed specifically in brain.

It localises to the cytoplasm. Its subcellular location is the endomembrane system. The enzyme catalyses a 1,2-diacyl-sn-glycero-3-phospho-(1D-myo-inositol-3-phosphate) + H2O = a 1,2-diacyl-sn-glycero-3-phospho-(1D-myo-inositol) + phosphate. The catalysed reaction is 1D-myo-inositol 1,3-bisphosphate + H2O = 1D-myo-inositol 1-phosphate + phosphate. Interaction with MTMR9 increases phosphatase activity. In terms of biological role, lipid phosphatase that specifically dephosphorylates the D-3 position of phosphatidylinositol 3-phosphate (PtdIns(3)P) and inositol 1,3-bisphosphate (Ins(1,3)P2). This is Phosphatidylinositol-3-phosphate phosphatase MTMR7 from Homo sapiens (Human).